Here is a 366-residue protein sequence, read N- to C-terminus: Holliday junction branch migration complex subunit RuvB (366 aa).

The interval 3–183 (ADGLVSAAAS…FGFTAHLDFY (181 aa)) is large ATPase domain (RuvB-L). ATP-binding positions include leucine 22, arginine 23, glycine 64, lysine 67, threonine 68, serine 69, 130–132 (EDF), arginine 173, tyrosine 183, and arginine 220. Threonine 68 contacts Mg(2+). A small ATPAse domain (RuvB-S) region spans residues 184–254 (APDELARVLT…VARAALRIYD (71 aa)). Residues 257-366 (GLGLDRLDRA…PEDGLHPGGG (110 aa)) are head domain (RuvB-H). 2 residues coordinate DNA: arginine 312 and arginine 317.

Belongs to the RuvB family. Homohexamer. Forms an RuvA(8)-RuvB(12)-Holliday junction (HJ) complex. HJ DNA is sandwiched between 2 RuvA tetramers; dsDNA enters through RuvA and exits via RuvB. An RuvB hexamer assembles on each DNA strand where it exits the tetramer. Each RuvB hexamer is contacted by two RuvA subunits (via domain III) on 2 adjacent RuvB subunits; this complex drives branch migration. In the full resolvosome a probable DNA-RuvA(4)-RuvB(12)-RuvC(2) complex forms which resolves the HJ.

It localises to the cytoplasm. The catalysed reaction is ATP + H2O = ADP + phosphate + H(+). Functionally, the RuvA-RuvB-RuvC complex processes Holliday junction (HJ) DNA during genetic recombination and DNA repair, while the RuvA-RuvB complex plays an important role in the rescue of blocked DNA replication forks via replication fork reversal (RFR). RuvA specifically binds to HJ cruciform DNA, conferring on it an open structure. The RuvB hexamer acts as an ATP-dependent pump, pulling dsDNA into and through the RuvAB complex. RuvB forms 2 homohexamers on either side of HJ DNA bound by 1 or 2 RuvA tetramers; 4 subunits per hexamer contact DNA at a time. Coordinated motions by a converter formed by DNA-disengaged RuvB subunits stimulates ATP hydrolysis and nucleotide exchange. Immobilization of the converter enables RuvB to convert the ATP-contained energy into a lever motion, pulling 2 nucleotides of DNA out of the RuvA tetramer per ATP hydrolyzed, thus driving DNA branch migration. The RuvB motors rotate together with the DNA substrate, which together with the progressing nucleotide cycle form the mechanistic basis for DNA recombination by continuous HJ branch migration. Branch migration allows RuvC to scan DNA until it finds its consensus sequence, where it cleaves and resolves cruciform DNA. The sequence is that of Holliday junction branch migration complex subunit RuvB from Frankia alni (strain DSM 45986 / CECT 9034 / ACN14a).